The chain runs to 121 residues: Acidic phospholipase A2 PLA-2 (121 aa).

7 cysteine pairs are disulfide-bonded: Cys-26–Cys-115, Cys-28–Cys-44, Cys-43–Cys-95, Cys-49–Cys-121, Cys-50–Cys-88, Cys-57–Cys-81, and Cys-75–Cys-86. Tyr-27, Gly-29, and Gly-31 together coordinate Ca(2+). His-47 is a catalytic residue. Asp-48 serves as a coordination point for Ca(2+). Residue Asp-89 is part of the active site.

Belongs to the phospholipase A2 family. Group II subfamily. D49 sub-subfamily. Ca(2+) is required as a cofactor. As to expression, expressed by the venom gland.

The protein resides in the secreted. It carries out the reaction a 1,2-diacyl-sn-glycero-3-phosphocholine + H2O = a 1-acyl-sn-glycero-3-phosphocholine + a fatty acid + H(+). In terms of biological role, PLA2 catalyzes the calcium-dependent hydrolysis of the 2-acyl groups in 3-sn-phosphoglycerides. This chain is Acidic phospholipase A2 PLA-2, found in Eristicophis macmahoni (Leaf-nosed viper).